A 671-amino-acid polypeptide reads, in one-letter code: Protein cereblon (671 aa).

The segment covering 1–11 has biased composition (acidic residues); sequence MDGEEAADIDE. Disordered regions lie at residues 1-59, 104-130, and 150-187; these read MDGE…VDGD, LTGT…PAQP, and GHNV…DAEA. Composition is skewed to low complexity over residues 39-51 and 105-115; these read QQQQ…SSGE and TGTTTPTPTAP. The span at 162–173 shows a compositional bias: polar residues; sequence SISSRHSGSDMS. Residues 309–537 form the Lon N-terminal domain; that stretch reads RMLIFMHQHI…IIGSTLKQES (229 aa). Positions 536–645 constitute a CULT domain; the sequence is ESLFYCRYCN…LAGSSVRIGK (110 aa). Zn(2+) is bound by residues Cys541, Cys544, Cys610, and Cys613.

Belongs to the CRBN family. Likely a component of a DCX (DDB1-CUL4-X-box) protein ligase complex. May interact with pic/DDB1. In terms of processing, ubiquitinated.

The protein localises to the nucleus. It participates in protein modification; protein ubiquitination. Substrate recognition component of a DCX (DDB1-CUL4-X-box) E3 protein ligase complex that mediates the ubiquitination and subsequent proteasomal degradation of target proteins. Has an essential role in mediating growth by negatively regulating insulin signaling. It also has a role in maintaining presynaptic function in the neuromuscular junction synapses of third-instar larvae. The protein is Protein cereblon of Drosophila grimshawi (Hawaiian fruit fly).